The sequence spans 306 residues: Serine/threonine-protein kinase csk1 (306 aa).

In terms of domain architecture, Protein kinase spans 11–306 (LTDIRHLTDG…KVSARLSQYA (296 aa)). ATP is bound by residues 17-25 (LTDGTISEV) and K40. D129 serves as the catalytic Proton acceptor.

This sequence belongs to the protein kinase superfamily. CMGC Ser/Thr protein kinase family. CDC2/CDKX subfamily.

The catalysed reaction is L-seryl-[protein] + ATP = O-phospho-L-seryl-[protein] + ADP + H(+). The enzyme catalyses L-threonyl-[protein] + ATP = O-phospho-L-threonyl-[protein] + ADP + H(+). Acts as a CAK-activating kinase that specifically activates crk1 of the crk1-mcs2 CAK complex. The polypeptide is Serine/threonine-protein kinase csk1 (csk1) (Schizosaccharomyces pombe (strain 972 / ATCC 24843) (Fission yeast)).